A 211-amino-acid polypeptide reads, in one-letter code: MFVLASASKARQKLLDQIALRHKVIVSDFDETQLQEPDPILKVKLLAKGKADSALKKLIEENHALNTYQALLGCDSLFEFKGEIFEKPINKEQLISRWKRMSGQSGFLHTGHYLISLDNSKSDMESISQNNSCEGVVSTKIEFMNLSNFEINKYASTSEPYNCAGGFAIEGNGGLFIKKIDGCFSNVIGLSLPWLKNNLEKYGLSRLLLDR.

D75 serves as the catalytic Proton acceptor.

It belongs to the Maf family. Requires a divalent metal cation as cofactor.

The protein resides in the cytoplasm. It carries out the reaction a ribonucleoside 5'-triphosphate + H2O = a ribonucleoside 5'-phosphate + diphosphate + H(+). The catalysed reaction is a 2'-deoxyribonucleoside 5'-triphosphate + H2O = a 2'-deoxyribonucleoside 5'-phosphate + diphosphate + H(+). Nucleoside triphosphate pyrophosphatase. May have a dual role in cell division arrest and in preventing the incorporation of modified nucleotides into cellular nucleic acids. This chain is Nucleoside triphosphate pyrophosphatase, found in Prochlorococcus marinus (strain NATL1A).